The following is a 520-amino-acid chain: Cytochrome P450 monooxygenase TRI4 (520 aa).

The helical transmembrane segment at 10 to 30 (LVNIPISHAVGVVAASTVIYF) threads the bilayer. Residue asparagine 447 is glycosylated (N-linked (GlcNAc...) asparagine). Cysteine 455 is a binding site for heme.

Belongs to the cytochrome P450 family. Requires heme as cofactor.

Its subcellular location is the membrane. Its pathway is sesquiterpene biosynthesis; trichothecene biosynthesis. Cytochrome P450 monooxygenase; part of the core gene cluster that mediates the biosynthesis of trichothecenes, a very large family of chemically related bicyclic sesquiterpene compounds acting as mycotoxins, including T2-toxin. The biosynthesis of trichothecenes begins with the cyclization of farnesyl diphosphate to trichodiene and is catalyzed by the trichodiene synthase TRI5. Trichodiene undergoes a series of oxygenations catalyzed by the cytochrome P450 monooxygenase TRI4. TRI4 controls the addition of four oxygens at C-2, C-3, C-11, and the C-12, C-13-epoxide to form the intermediate isotrichotriol. Isotrichotriol then undergoes a non-enzymatic isomerization and cyclization to form isotrichodermol. During this process, the oxygen at the C-2 position becomes the pyran ring oxygen and the hydroxyl group at C-11 is lost. More complex type A trichothecenes are built by modifying isotrichodermol through a series of paired hydroxylation and acetylation or acylation steps. Isotrichodermol is converted to isotrichodermin by the acetyltransferase TRI101. TRI101 encodes a C-3 transacetylase that acts as a self-protection or resistance factor during biosynthesis and that the presence of a free C-3 hydroxyl group is a key component of Fusarium trichothecene phytotoxicity. A second hydroxyl group is added to C-15 by the trichothecene C-15 hydroxylase TRI11, producing 15-decalonectrin, which is then acetylated by TRI3, producing calonectrin. A third hydroxyl group is added at C-4 by the cytochrome P450 monooxygenase TRI13, converting calonectrin to 3,15-diacetoxyspirpenol, which is subsequently acetylated by the acetyltransferase TRI7. A fourth hydroxyl group is added to C-8 by the cytochrome P450 monooxygenase TRI1, followed by the addition of an isovaleryl moiety by TRI16. Finally, the acetyl group is removed from the C-3 position by the trichothecene C-3 esterase TRI8 to produce T-2 toxin. This chain is Cytochrome P450 monooxygenase TRI4, found in Fusarium sporotrichioides.